Here is a 151-residue protein sequence, read N- to C-terminus: Large ribosomal subunit protein bL9 (151 aa).

This sequence belongs to the bacterial ribosomal protein bL9 family.

Its function is as follows. Binds to the 23S rRNA. The protein is Large ribosomal subunit protein bL9 of Lactobacillus acidophilus (strain ATCC 700396 / NCK56 / N2 / NCFM).